A 352-amino-acid polypeptide reads, in one-letter code: Chorismate synthase (352 aa).

2 residues coordinate NADP(+): Arg48 and Arg54. Residues 125 to 127 (RSS), 238 to 239 (NA), Gly278, 293 to 297 (KPTSS), and Arg319 each bind FMN.

The protein belongs to the chorismate synthase family. Homotetramer. Requires FMNH2 as cofactor.

It carries out the reaction 5-O-(1-carboxyvinyl)-3-phosphoshikimate = chorismate + phosphate. It participates in metabolic intermediate biosynthesis; chorismate biosynthesis; chorismate from D-erythrose 4-phosphate and phosphoenolpyruvate: step 7/7. In terms of biological role, catalyzes the anti-1,4-elimination of the C-3 phosphate and the C-6 proR hydrogen from 5-enolpyruvylshikimate-3-phosphate (EPSP) to yield chorismate, which is the branch point compound that serves as the starting substrate for the three terminal pathways of aromatic amino acid biosynthesis. This reaction introduces a second double bond into the aromatic ring system. The protein is Chorismate synthase of Bordetella petrii (strain ATCC BAA-461 / DSM 12804 / CCUG 43448).